The chain runs to 563 residues: Sperm-tail PG-rich repeat-containing protein 2 (563 aa).

STPGR repeat units lie at residues 21–34 (VGPG…PKQQ), 63–73 (PGPAHYNVSQA), and 97–107 (GPGPASYDCPY). The interval 131–163 (IPSIPSSGKSHGYHLNEDDTIMRRTPPSSDKTM) is disordered. STPGR repeat units follow at residues 200-219 (GPGP…YENI), 250-263 (PGPG…QFDH), 292-321 (TPAP…FGQR), 334-353 (LPGP…QVKK), 423-438 (LPAP…YDMS), 473-483 (GPGPATYNPIL), and 507-518 (SPGPTTYELSPF).

The protein is Sperm-tail PG-rich repeat-containing protein 2 (Stpg2) of Rattus norvegicus (Rat).